A 381-amino-acid polypeptide reads, in one-letter code: MSKRDFYEVLGVSRDASERDIKKAYKRLAMKFHPDRNQGDDSAADKFKEVKVAYEILTDAQKKAAYDQYGHAAFEQGGMGGGGYGGGGQGDFGDIFGDVFGDIFGGGRRGGGQARAQRGSDLRYNMELSLEEAVRGVSKEIEVPTLVECDICDGSGAKAGSSAQTCGTCHGHGQVQMRQGFFAVQQTCPTCNGKGKIIKDPCNSCHGQGRKQKTKTLNVKIPAGVDTGDRIRLSGEGEAGEHGAPAGDLYVQVHVKEHNIFERDGNNLYCEVPVSFSMAALGGEVEVPTLDGRVNLKVPEETQTGRMFRMRGKGVKGVRGGGVGDLIVKLVVETPVKLSSRQKELLREFEETCCGEAASKHKPKSEGFFSGVKNFFDDLTK.

The region spanning 5-70 (DFYEVLGVSR…QKKAAYDQYG (66 aa)) is the J domain. Residues 136–214 (GVSKEIEVPT…CHGQGRKQKT (79 aa)) form a CR-type zinc finger. Cys-149, Cys-152, Cys-166, Cys-169, Cys-188, Cys-191, Cys-202, and Cys-205 together coordinate Zn(2+). CXXCXGXG motif repeat units lie at residues 149–156 (CDICDGSG), 166–173 (CGTCHGHG), 188–195 (CPTCNGKG), and 202–209 (CNSCHGQG).

Belongs to the DnaJ family. Homodimer. The cofactor is Zn(2+).

The protein localises to the cytoplasm. Its function is as follows. Participates actively in the response to hyperosmotic and heat shock by preventing the aggregation of stress-denatured proteins and by disaggregating proteins, also in an autonomous, DnaK-independent fashion. Unfolded proteins bind initially to DnaJ; upon interaction with the DnaJ-bound protein, DnaK hydrolyzes its bound ATP, resulting in the formation of a stable complex. GrpE releases ADP from DnaK; ATP binding to DnaK triggers the release of the substrate protein, thus completing the reaction cycle. Several rounds of ATP-dependent interactions between DnaJ, DnaK and GrpE are required for fully efficient folding. Also involved, together with DnaK and GrpE, in the DNA replication of plasmids through activation of initiation proteins. The protein is Chaperone protein DnaJ of Vibrio atlanticus (strain LGP32) (Vibrio splendidus (strain Mel32)).